We begin with the raw amino-acid sequence, 200 residues long: Ras-related protein RABF2a (200 aa).

Position 17-25 (17-25 (GDVGAGKSS)) interacts with GTP. The short motif at 39–47 (QESTIGAAF) is the Effector region element. GTP contacts are provided by residues 65 to 69 (DTAGQ), 123 to 126 (NKAD), and 153 to 154 (SA). Residues C198 and C199 are each lipidated (S-geranylgeranyl cysteine).

This sequence belongs to the small GTPase superfamily. Rab family. Interacts with VPS9A. Interacts with EREX (via PX domain). Binds to VPS3. High in stem, root, and inflorescence.

The protein resides in the endosome membrane. It is found in the prevacuolar compartment membrane. Involved in the trafficking of soluble cargo proteins from the prevacuolar compartment to the central vacuole. Involved in vacuolar transport of storage proteins with EREX as effector. Regulates membrane trafficking to protein storage vacuoles (PSVs). The protein is Ras-related protein RABF2a (RABF2A) of Arabidopsis thaliana (Mouse-ear cress).